We begin with the raw amino-acid sequence, 185 residues long: Small ribosomal subunit protein uS4 (185 aa).

Residues 108-170 (RRLQTLVYRK…GKSPFVDASH (63 aa)) form the S4 RNA-binding domain.

Belongs to the universal ribosomal protein uS4 family. In terms of assembly, part of the 30S ribosomal subunit. Contacts protein S5. The interaction surface between S4 and S5 is involved in control of translational fidelity.

In terms of biological role, one of the primary rRNA binding proteins, it binds directly to 16S rRNA where it nucleates assembly of the body of the 30S subunit. Its function is as follows. With S5 and S12 plays an important role in translational accuracy. The sequence is that of Small ribosomal subunit protein uS4 from Methanoregula boonei (strain DSM 21154 / JCM 14090 / 6A8).